The chain runs to 206 residues: Holliday junction branch migration complex subunit RuvA (206 aa).

The tract at residues 1–62 is domain I; the sequence is MYDYLKGLIT…EDAQVLYGFP (62 aa). The domain II stretch occupies residues 63-141; it reads NLDQRELFRK…SLLETIELPS (79 aa). Residues 142–152 are flexible linker; the sequence is TEDELPLFGVH. The interval 153-206 is domain III; sequence PYKHELEEAILALAALGYSEKELEKIRPLLEDNDKLETTDAYMKQALQLLLKLK.

It belongs to the RuvA family. Homotetramer. Forms an RuvA(8)-RuvB(12)-Holliday junction (HJ) complex. HJ DNA is sandwiched between 2 RuvA tetramers; dsDNA enters through RuvA and exits via RuvB. An RuvB hexamer assembles on each DNA strand where it exits the tetramer. Each RuvB hexamer is contacted by two RuvA subunits (via domain III) on 2 adjacent RuvB subunits; this complex drives branch migration. In the full resolvosome a probable DNA-RuvA(4)-RuvB(12)-RuvC(2) complex forms which resolves the HJ.

Its subcellular location is the cytoplasm. Its function is as follows. The RuvA-RuvB-RuvC complex processes Holliday junction (HJ) DNA during genetic recombination and DNA repair, while the RuvA-RuvB complex plays an important role in the rescue of blocked DNA replication forks via replication fork reversal (RFR). RuvA specifically binds to HJ cruciform DNA, conferring on it an open structure. The RuvB hexamer acts as an ATP-dependent pump, pulling dsDNA into and through the RuvAB complex. HJ branch migration allows RuvC to scan DNA until it finds its consensus sequence, where it cleaves and resolves the cruciform DNA. In Lysinibacillus sphaericus (strain C3-41), this protein is Holliday junction branch migration complex subunit RuvA.